A 361-amino-acid polypeptide reads, in one-letter code: Salt tolerance receptor-like cytoplasmic kinase 1 (361 aa).

S-palmitoyl cysteine attachment occurs at residues C5, C10, and C14. The region spanning 67–347 (GFSSRVIGHG…RALQEKTSAL (281 aa)) is the Protein kinase domain. ATP is bound by residues 73–81 (IGHGGFSTV) and K95. D195 acts as the Proton acceptor in catalysis.

The protein belongs to the protein kinase superfamily. Ser/Thr protein kinase family. As to quaternary structure, self-interacts. Interacts with CATA, CATB and CATC at the plasma membrane. Palmitoylated. Palmotylation at Cys-5, Cys-10 and Cys-14 by DHHC9 is required for plasma membrane targeting and STRK1 function. Post-translationally, autophosphorylated. As to expression, accumulates in seeds. Mainly expressed in young roots, and, to a lower extent, in leaf veins, seedlings, stems, leaf sheath and young spikelet.

It is found in the cell membrane. It catalyses the reaction L-seryl-[protein] + ATP = O-phospho-L-seryl-[protein] + ADP + H(+). It carries out the reaction L-threonyl-[protein] + ATP = O-phospho-L-threonyl-[protein] + ADP + H(+). The enzyme catalyses L-tyrosyl-[protein] + ATP = O-phospho-L-tyrosyl-[protein] + ADP + H(+). Acts probably as a dual specificity protein kinase. Regulates hydrogen peroxide (H(2)O(2)) homeostasis and improves salt tolerance by phosphorylating tyrosine residues of CATC thus activating its catalase activity. Promotes growth at the seedling stage and prevents grain yield loss under salt stress conditions. The sequence is that of Salt tolerance receptor-like cytoplasmic kinase 1 from Oryza sativa subsp. japonica (Rice).